Reading from the N-terminus, the 395-residue chain is D-serine dehydratase (395 aa).

K46 bears the N6-(pyridoxal phosphate)lysine mark. Residues Y184, Y191, T232, G254, and N255 each coordinate pyridoxal 5'-phosphate. Residues H365 and C367 each coordinate Zn(2+).

It belongs to the DSD1 family. Requires pyridoxal 5'-phosphate as cofactor. Zn(2+) serves as cofactor.

It catalyses the reaction D-serine = pyruvate + NH4(+). Its function is as follows. Catalyzes the conversion of D-serine to pyruvate and ammonia. Plays a role in D-serine detoxification. The chain is D-serine dehydratase from Dictyostelium discoideum (Social amoeba).